The sequence spans 553 residues: RNA N(6)-adenosine-methyltransferase METTL16 (553 aa).

The segment at 17 to 20 (PPDF) is RNA-binding. S-adenosyl-L-methionine-binding residues include R82, G110, S114, E133, T164, and N184. Residues 163-167 (KTLLM) are K-loop. RNA-binding regions lie at residues 199 to 211 (SRNSRRPPPSSVN), 250 to 254 (GKKCS), and 277 to 283 (QGRTMRW). Residues 289–400 (FYDDVTVPSP…QLREVPRAPE (112 aa)) are VCR 1. S329, S425, and S429 each carry phosphoserine. The tract at residues 457-496 (EETPEATEDERDEERGGMEAMESCKGSSNGAQDGEASEKG) is disordered. Residues 458–468 (ETPEATEDERD) show a composition bias toward acidic residues. T463 is subject to Phosphothreonine. The interval 506 to 553 (YLFKCLVNIKKEAGDAVVEMHWVEGQNRDLMNQLCTYVRNQILRLVAS) is VCR 2.

This sequence belongs to the methyltransferase superfamily. METTL16/RlmF family. In terms of assembly, interacts with MEPCE. Interacts with LARP7.

The protein localises to the nucleus. Its subcellular location is the cytoplasm. It catalyses the reaction adenosine in U6 snRNA + S-adenosyl-L-methionine = N(6)-methyladenosine in U6 snRNA + S-adenosyl-L-homocysteine + H(+). The enzyme catalyses an adenosine in mRNA + S-adenosyl-L-methionine = an N(6)-methyladenosine in mRNA + S-adenosyl-L-homocysteine + H(+). Its activity is regulated as follows. Methyltransferase activity is autoinhibited by the K-loop region that blocks S-adenosyl-L-methionine-binding. Upon activation, K-loop changes conformation, allowing S-adenosyl-L-methionine-binding and subsequent methyltransferase activity. mRNA N6-adenosine-methyltransferase activity is inhibited by zinc. RNA N6-methyltransferase that methylates adenosine residues at the N(6) position of a subset of RNAs and is involved in S-adenosyl-L-methionine homeostasis by regulating expression of MAT2A transcripts. Able to N6-methylate a subset of mRNAs and U6 small nuclear RNAs (U6 snRNAs). In contrast to the METTL3-METTL14 heterodimer, only able to methylate a limited number of RNAs: requires both a 5'UACAGAGAA-3' nonamer sequence and a specific RNA structure. Plays a key role in S-adenosyl-L-methionine homeostasis by mediating N6-methylation of MAT2A mRNAs, altering splicing of MAT2A transcripts: in presence of S-adenosyl-L-methionine, binds the 3'-UTR region of MAT2A mRNA and specifically N6-methylates the first hairpin of MAT2A mRNA, preventing recognition of their 3'-splice site by U2AF1/U2AF35, thereby inhibiting splicing and protein production of S-adenosylmethionine synthase. In S-adenosyl-L-methionine-limiting conditions, binds the 3'-UTR region of MAT2A mRNA but stalls due to the lack of a methyl donor, preventing N6-methylation and promoting expression of MAT2A. In addition to mRNAs, also able to mediate N6-methylation of U6 small nuclear RNA (U6 snRNA): specifically N6-methylates adenine in position 43 of U6 snRNAs. Also able to bind various lncRNAs, such as 7SK snRNA (7SK RNA) or 7SL RNA. Specifically binds the 3'-end of the MALAT1 long non-coding RNA. This Mus musculus (Mouse) protein is RNA N(6)-adenosine-methyltransferase METTL16.